A 486-amino-acid chain; its full sequence is Maintenance of mitochondrial morphology protein 1 (486 aa).

Residues 1–19 (MSNDTSAQPAQSSLSFTQG) lie on the Lumenal side of the membrane. The helical transmembrane segment at 20–40 (LLVGQLSVVLLIGAFIKFFIF) threads the bilayer. Topologically, residues 41–486 (GEASPSSSRS…GSLPDVVPVT (446 aa)) are cytoplasmic. Disordered regions lie at residues 45–98 (PSSS…RSIL), 269–318 (QTST…AGTT), 393–412 (VRGQ…GVST), and 420–486 (ARDA…VPVT). Positions 51–61 (QTRRTSPHKRS) are enriched in basic residues. A compositionally biased stretch (basic and acidic residues) spans 70–79 (LGSRSLKEKP). Composition is skewed to polar residues over residues 80-96 (SSNV…NTRS), 269-291 (QTST…NDYS), 307-318 (EQATQANNAGTT), and 401-412 (EVGSSGNAGVST). The region spanning 125 to 382 (QPESLDWFNV…EPRVQVVALP (258 aa)) is the SMP-LTD domain. Basic and acidic residues-rich tracts occupy residues 429 to 440 (HATRDADMEGLR) and 462 to 473 (DSREQACRDDPF).

It belongs to the MMM1 family. Homodimer. Component of the ER-mitochondria encounter structure (ERMES) or MDM complex, composed of MMM1, MDM10, MDM12 and MDM34. An MMM1 homodimer associates with one molecule of MDM12 on each side in a pairwise head-to-tail manner, and the SMP-LTD domains of MMM1 and MDM12 generate a continuous hydrophobic tunnel for phospholipid trafficking.

It localises to the endoplasmic reticulum membrane. Component of the ERMES/MDM complex, which serves as a molecular tether to connect the endoplasmic reticulum (ER) and mitochondria. Components of this complex are involved in the control of mitochondrial shape and protein biogenesis, and function in nonvesicular lipid trafficking between the ER and mitochondria. The MDM12-MMM1 subcomplex functions in the major beta-barrel assembly pathway that is responsible for biogenesis of all outer membrane beta-barrel proteins, and acts in a late step after the SAM complex. The MDM10-MDM12-MMM1 subcomplex further acts in the TOM40-specific pathway after the action of the MDM12-MMM1 complex. Essential for establishing and maintaining the structure of mitochondria and maintenance of mtDNA nucleoids. The sequence is that of Maintenance of mitochondrial morphology protein 1 from Coccidioides immitis (strain RS) (Valley fever fungus).